The primary structure comprises 159 residues: Ribosomal RNA large subunit methyltransferase H (159 aa).

S-adenosyl-L-methionine-binding positions include leucine 76, glycine 108, and 127–132 (FSKMTF).

It belongs to the RNA methyltransferase RlmH family. Homodimer.

The protein localises to the cytoplasm. It carries out the reaction pseudouridine(1915) in 23S rRNA + S-adenosyl-L-methionine = N(3)-methylpseudouridine(1915) in 23S rRNA + S-adenosyl-L-homocysteine + H(+). In terms of biological role, specifically methylates the pseudouridine at position 1915 (m3Psi1915) in 23S rRNA. The polypeptide is Ribosomal RNA large subunit methyltransferase H (Clostridium botulinum (strain Alaska E43 / Type E3)).